The following is a 523-amino-acid chain: MAVGRKSLILSLLIQHFVLLHGAKILTVCFLGGSHYLWMDEISRILHNNGQEVTMFLQIADGLLPDYQMQESPYRLITWSLDKNYLKEFSEFFRDSKYNFKDCDELSSYLGLMTHFSRQCKMIFNQTSIMNLLKEEKYDLAVIDSFNPCTFLVSEKLGIPFIATHPFPVKSPWHSGIPNQLSYMPVYQSQLTDHMDFFERVKNVFMYIASAVLERKIYSLFDDVIEEHFPACSRPSFEELYKKTALWMYLTDFTIEFPHPFFPNVLYIGGVLAKPAKPVSEELEDFIAQSGEHGFIIVTFGSMVPSNPLTEFVKEMNDGFSKIPQKVIWRYRISEWPKVLQLAPNVKIMNWISQNDLLGHPKARLLVTHGGVNSIQEAIYHGVPMVAIPLFFDQFDNAVRIKAKHLGTFIPKDQLKAEKLANAIRDVIGGESYKNSAMHLSLIQRSQPFPKDQQIVRWVEHIVKVGGTDHLIPYSYQQPLYQQYLLDVFLFVCVCVIGACYLTVKLLKMFIQKLCSFRKLKQN.

Residues 1 to 23 (MAVGRKSLILSLLIQHFVLLHGA) form the signal peptide. Over 24–483 (KILTVCFLGG…YSYQQPLYQQ (460 aa)) the chain is Extracellular. A glycan (N-linked (GlcNAc...) asparagine) is linked at asparagine 125. A helical transmembrane segment spans residues 484-504 (YLLDVFLFVCVCVIGACYLTV). Residues 505 to 523 (KLLKMFIQKLCSFRKLKQN) are Cytoplasmic-facing.

Belongs to the UDP-glycosyltransferase family.

The protein resides in the membrane. The enzyme catalyses glucuronate acceptor + UDP-alpha-D-glucuronate = acceptor beta-D-glucuronoside + UDP + H(+). Its function is as follows. UDP-glucuronosyltransferases catalyze phase II biotransformation reactions in which lipophilic substrates are conjugated with glucuronic acid to increase water solubility and enhance excretion. They are of major importance in the conjugation and subsequent elimination of potentially toxic xenobiotics and endogenous compounds. The chain is UDP-glucuronosyltransferase 3A1 (ugt3a1) from Xenopus laevis (African clawed frog).